The chain runs to 953 residues: ABC transporter A family member 11 (953 aa).

6 consecutive transmembrane segments (helical) span residues 33–53, 230–250, 277–297, 307–327, 341–361, and 417–437; these read CLQI…EEAM, GPVF…GALV, TWEG…GMIF, FVLV…LAFA, VGFL…TGFP, and VISI…WFVL. The ABC transporter domain maps to 519–764; sequence VQIHGLAKTY…FGTGFVATVS (246 aa). ATP is bound at residue 565–572; that stretch reads GPNGAGKT.

This sequence belongs to the ABC transporter superfamily. ABCA family. CPR flippase (TC 3.A.1.211) subfamily.

It is found in the membrane. The protein is ABC transporter A family member 11 (ABCA11) of Arabidopsis thaliana (Mouse-ear cress).